Consider the following 180-residue polypeptide: Large ribosomal subunit protein uL5 (180 aa).

It belongs to the universal ribosomal protein uL5 family. Part of the 50S ribosomal subunit; part of the 5S rRNA/L5/L18/L25 subcomplex. Contacts the 5S rRNA and the P site tRNA. Forms a bridge to the 30S subunit in the 70S ribosome.

In terms of biological role, this is one of the proteins that bind and probably mediate the attachment of the 5S RNA into the large ribosomal subunit, where it forms part of the central protuberance. In the 70S ribosome it contacts protein S13 of the 30S subunit (bridge B1b), connecting the 2 subunits; this bridge is implicated in subunit movement. Contacts the P site tRNA; the 5S rRNA and some of its associated proteins might help stabilize positioning of ribosome-bound tRNAs. The protein is Large ribosomal subunit protein uL5 of Mycoplasma mycoides subsp. mycoides SC (strain CCUG 32753 / NCTC 10114 / PG1).